We begin with the raw amino-acid sequence, 562 residues long: RNA N(6)-adenosine-methyltransferase METTL16 (562 aa).

The RNA-binding stretch occupies residues Pro17–Phe20. S-adenosyl-L-methionine contacts are provided by Arg82, Gly110, Ser114, Glu133, Thr164, and Asn184. Residues Lys163–Met167 are K-loop. RNA-binding stretches follow at residues Ser199 to Asn211, Gly250 to Ser254, and Gln277 to Trp283. Positions Phe289 to Glu400 are VCR 1. Ser329 bears the Phosphoserine mark. A compositionally biased stretch (basic and acidic residues) spans Val402 to Pro413. A disordered region spans residues Val402–Ser498. Acidic residues predominate over residues Glu458–Arg467. Thr463 is modified (phosphothreonine). A compositionally biased stretch (polar residues) spans Cys480–Phe496. The interval Tyr514–Asn562 is VCR 2.

The protein belongs to the methyltransferase superfamily. METTL16/RlmF family. Interacts with MEPCE. Interacts with LARP7.

It localises to the nucleus. The protein localises to the cytoplasm. It carries out the reaction adenosine in U6 snRNA + S-adenosyl-L-methionine = N(6)-methyladenosine in U6 snRNA + S-adenosyl-L-homocysteine + H(+). The catalysed reaction is an adenosine in mRNA + S-adenosyl-L-methionine = an N(6)-methyladenosine in mRNA + S-adenosyl-L-homocysteine + H(+). With respect to regulation, methyltransferase activity is autoinhibited by the K-loop region that blocks S-adenosyl-L-methionine-binding. Upon activation, K-loop changes conformation, allowing S-adenosyl-L-methionine-binding and subsequent methyltransferase activity. mRNA N6-adenosine-methyltransferase activity is inhibited by zinc. Functionally, RNA N6-methyltransferase that methylates adenosine residues at the N(6) position of a subset of RNAs and is involved in S-adenosyl-L-methionine homeostasis by regulating expression of MAT2A transcripts. Able to N6-methylate a subset of mRNAs and U6 small nuclear RNAs (U6 snRNAs). In contrast to the METTL3-METTL14 heterodimer, only able to methylate a limited number of RNAs: requires both a 5'UACAGAGAA-3' nonamer sequence and a specific RNA structure. Plays a key role in S-adenosyl-L-methionine homeostasis by mediating N6-methylation of MAT2A mRNAs, altering splicing of MAT2A transcripts: in presence of S-adenosyl-L-methionine, binds the 3'-UTR region of MAT2A mRNA and specifically N6-methylates the first hairpin of MAT2A mRNA, preventing recognition of their 3'-splice site by U2AF1/U2AF35, thereby inhibiting splicing and protein production of S-adenosylmethionine synthase. In S-adenosyl-L-methionine-limiting conditions, binds the 3'-UTR region of MAT2A mRNA but stalls due to the lack of a methyl donor, preventing N6-methylation and promoting expression of MAT2A. In addition to mRNAs, also able to mediate N6-methylation of U6 small nuclear RNA (U6 snRNA): specifically N6-methylates adenine in position 43 of U6 snRNAs. Also able to bind various lncRNAs, such as 7SK snRNA (7SK RNA) or 7SL RNA. Specifically binds the 3'-end of the MALAT1 long non-coding RNA. This is RNA N(6)-adenosine-methyltransferase METTL16 from Homo sapiens (Human).